A 506-amino-acid chain; its full sequence is Mitogen-activated protein kinase 13 (506 aa).

The 292-residue stretch at 13 to 304 (YQIQEVVGKG…AEEALADPYF (292 aa)) folds into the Protein kinase domain. Residues 19–27 (VGKGSYGVV) and Lys42 each bind ATP. Residue Asp139 is the Proton acceptor of the active site. A Phosphothreonine modification is found at Thr175. The short motif at 175–177 (TDY) is the TXY element. Tyr177 is subject to Phosphotyrosine. Residues 384-421 (YSRGERSTPLRRQHASLPRERVCSSVDSNNQDSDNEER) are disordered.

It belongs to the protein kinase superfamily. CMGC Ser/Thr protein kinase family. MAP kinase subfamily. Post-translationally, dually phosphorylated on Thr-175 and Tyr-177, which activates the enzyme.

The enzyme catalyses L-seryl-[protein] + ATP = O-phospho-L-seryl-[protein] + ADP + H(+). It carries out the reaction L-threonyl-[protein] + ATP = O-phospho-L-threonyl-[protein] + ADP + H(+). Activated by threonine and tyrosine phosphorylation. This Oryza sativa subsp. indica (Rice) protein is Mitogen-activated protein kinase 13 (MPK13).